The primary structure comprises 592 residues: Methionine--tRNA ligase (592 aa).

Residues 12–22 carry the 'HIGH' region motif; that stretch reads PYANGPFHVGH. Zn(2+)-binding residues include cysteine 144, cysteine 147, cysteine 157, and cysteine 160. Positions 342–346 match the 'KMSKS' region motif; that stretch reads KMSTS. Residue threonine 345 coordinates ATP.

The protein belongs to the class-I aminoacyl-tRNA synthetase family. MetG type 1 subfamily. As to quaternary structure, monomer. The cofactor is Zn(2+).

Its subcellular location is the cytoplasm. The enzyme catalyses tRNA(Met) + L-methionine + ATP = L-methionyl-tRNA(Met) + AMP + diphosphate. Its function is as follows. Is required not only for elongation of protein synthesis but also for the initiation of all mRNA translation through initiator tRNA(fMet) aminoacylation. This Roseiflexus castenholzii (strain DSM 13941 / HLO8) protein is Methionine--tRNA ligase.